The sequence spans 221 residues: Ribosomal RNA large subunit methyltransferase E (221 aa).

Positions 60, 62, 89, 105, and 134 each coordinate S-adenosyl-L-methionine. K174 serves as the catalytic Proton acceptor. Residues 199–221 (KPKASRDKSSETFLLGRQLKHPG) form a disordered region.

The protein belongs to the class I-like SAM-binding methyltransferase superfamily. RNA methyltransferase RlmE family.

It localises to the cytoplasm. It carries out the reaction uridine(2552) in 23S rRNA + S-adenosyl-L-methionine = 2'-O-methyluridine(2552) in 23S rRNA + S-adenosyl-L-homocysteine + H(+). In terms of biological role, specifically methylates the uridine in position 2552 of 23S rRNA at the 2'-O position of the ribose in the fully assembled 50S ribosomal subunit. This Ralstonia pickettii (strain 12J) protein is Ribosomal RNA large subunit methyltransferase E.